The following is a 275-amino-acid chain: Methylglyoxal reductase DkgA (275 aa).

Tyrosine 51 (proton donor) is an active-site residue. Histidine 107 provides a ligand contact to substrate. An NADP(+)-binding site is contributed by 187–241 (SPLAQGGKGVFDQKVIRDLADKYGKTPAQIVIRWHLDSGLVVIPKSVTPSRIAEN).

This sequence belongs to the aldo/keto reductase family. Monomer.

The protein resides in the cytoplasm. The catalysed reaction is hydroxyacetone + NADP(+) = methylglyoxal + NADPH + H(+). Its function is as follows. Aldo-keto reductase that significantly contributes to cellular methylglyoxal detoxification by catalyzing the NADPH-dependent conversion of methylglyoxal to acetol. The polypeptide is Methylglyoxal reductase DkgA (Escherichia coli O157:H7).